The sequence spans 276 residues: Halorhodopsin (276 aa).

A propeptide spanning residues 1 to 21 (MTAASTTATTMLQATQSDVLQ) is cleaved from the precursor. Over 22 to 25 (EIQS) the chain is Extracellular. The chain crosses the membrane as a helical span at residues 26-51 (NFLLNSSIWVNIALAGVVILLFVAMG). At 52–57 (RDIESP) the chain is on the cytoplasmic side. A helical transmembrane segment spans residues 58 to 81 (RAKLIWVATMLVPLVSISSYAGLA). Topologically, residues 82–105 (SGLTVGFLQMPPGHALAGQEVLSP) are extracellular. A helical transmembrane segment spans residues 106–127 (WGRYLTWTFSTPMILLALGLLA). The Cytoplasmic portion of the chain corresponds to 128 to 130 (DTD). Residues 131–154 (IASLFTAITMDIGMCVTGLAAALI) form a helical membrane-spanning segment. Topologically, residues 155–157 (TSS) are extracellular. A helical membrane pass occupies residues 158–180 (HLLRWVFYGISCAFFVAVLYVLL). Residues 181–192 (VQWPADAEAAGT) are Cytoplasmic-facing. A helical membrane pass occupies residues 193–216 (SEIFGTLKILTVVLWLGYPILWAL). Residues 217 to 225 (GSEGVALLS) lie on the Extracellular side of the membrane. A helical membrane pass occupies residues 226-254 (VGVTSWGYSGLDILAKYVFAFLLLRWVAA). The residue at position 241 (Lys-241) is an N6-(retinylidene)lysine. Residues 255 to 276 (NEGAVSGSGMSIGSGGAAPADD) are Cytoplasmic-facing.

The protein belongs to the archaeal/bacterial/fungal opsin family.

It localises to the cell membrane. In terms of biological role, light-driven chloride pump. The chain is Halorhodopsin (hop) from Halobacterium halobium (strain port).